Reading from the N-terminus, the 234-residue chain is Small ribosomal subunit protein uS2c (234 aa).

It belongs to the universal ribosomal protein uS2 family.

Its subcellular location is the plastid. The protein localises to the chloroplast. The sequence is that of Small ribosomal subunit protein uS2c (rps2) from Pinus koraiensis (Korean pine).